The sequence spans 190 residues: Peptidyl-tRNA hydrolase (190 aa).

Tyr-18 provides a ligand contact to tRNA. His-23 acts as the Proton acceptor in catalysis. TRNA is bound by residues Phe-69, Asn-71, and Asn-117.

Belongs to the PTH family. Monomer.

It is found in the cytoplasm. The catalysed reaction is an N-acyl-L-alpha-aminoacyl-tRNA + H2O = an N-acyl-L-amino acid + a tRNA + H(+). Its function is as follows. Hydrolyzes ribosome-free peptidyl-tRNAs (with 1 or more amino acids incorporated), which drop off the ribosome during protein synthesis, or as a result of ribosome stalling. Catalyzes the release of premature peptidyl moieties from peptidyl-tRNA molecules trapped in stalled 50S ribosomal subunits, and thus maintains levels of free tRNAs and 50S ribosomes. The protein is Peptidyl-tRNA hydrolase of Rhodococcus opacus (strain B4).